A 1719-amino-acid chain; its full sequence is 5'-3' exoribonuclease 1 (1719 aa).

Basic and acidic residues predominate over residues 1268–1298 (HKSGFTDHSVRHQQRKHDSQRKFKEEYKSPK). The segment at 1268–1317 (HKSGFTDHSVRHQQRKHDSQRKFKEEYKSPKAECQSQKLSSKQTSGGSAR) is disordered. Positions 1301 to 1314 (CQSQKLSSKQTSGG) are enriched in polar residues. Serine 1382 is modified (phosphoserine). The segment covering 1397-1430 (ILKIDSPDTRDSKNDMKKSDNEATVSSRRDERGV) has biased composition (basic and acidic residues). 2 disordered regions span residues 1397-1445 (ILKI…KPHG) and 1634-1719 (ENKE…KPSE). Polar residues predominate over residues 1638–1660 (AQSSQATPLQTNKPGSSEATKMT). The segment covering 1661-1680 (PQESPPASSSSSQAAQPVSS) has biased composition (low complexity). Residues 1681–1690 (HVETASQGHV) show a composition bias toward polar residues.

This sequence belongs to the 5'-3' exonuclease family. Found in a mRNP complex with UPF1, UPF2, UPF3B and XRN1. Associates with alpha and beta tubulins. Interacts with DIS3L2. Interacts with ZC3HAV1 in an RNA-dependent manner. Interacts with ZFP36L1. Interacts with TRIM71 (via NHL repeats) in an RNA-dependent manner. Interacts with YTHDC2 (via ANK repeats). Interacts with DHX34; the interaction is RNA-independent. As to expression, expressed in heart, brain (spinal cord, dorsal root and superior cervical ganglia, neurons of the cerebrum and brain stem), peripheral nerve fibers in the skin and intestine, spleen, lung, liver, skeletal muscle, kidney and testis.

It is found in the cytoplasm. In terms of biological role, major 5'-3' exoribonuclease involved in mRNA decay. Required for the 5'-3'-processing of the G4 tetraplex-containing DNA and RNA substrates. The kinetic of hydrolysis is faster for G4 RNA tetraplex than for G4 DNA tetraplex and monomeric RNA tetraplex. Binds to RNA and DNA. Plays a role in replication-dependent histone mRNA degradation. The chain is 5'-3' exoribonuclease 1 from Mus musculus (Mouse).